We begin with the raw amino-acid sequence, 165 residues long: Nascent polypeptide-associated complex subunit beta (165 aa).

In terms of domain architecture, NAC-A/B spans threonine 33–leucine 97. Positions glutamine 120–serine 165 are disordered. Acidic residues predominate over residues glutamine 134–proline 143. A compositionally biased stretch (low complexity) spans aspartate 144–serine 165.

It belongs to the NAC-beta family. In terms of assembly, part of the nascent polypeptide-associated complex (NAC).

This Arabidopsis thaliana (Mouse-ear cress) protein is Nascent polypeptide-associated complex subunit beta.